Here is a 204-residue protein sequence, read N- to C-terminus: Somatotropin (204 aa).

A signal peptide spans 1–17; it reads MDRAILLLSVVCLVVSS. Glutamine 18 bears the Pyrrolidone carboxylic acid mark. Histidine 36 provides a ligand contact to Zn(2+). A disulfide bridge links cysteine 69 with cysteine 177. Glutamate 186 contacts Zn(2+). Cysteine 194 and cysteine 202 are oxidised to a cystine.

This sequence belongs to the somatotropin/prolactin family.

It is found in the secreted. Growth hormone plays an important role in growth control and is involved in the regulation of several anabolic processes. Implicated as an osmoregulatory substance important for seawater adaptation. The sequence is that of Somatotropin (gh) from Odontesthes argentinensis (Marine silverside).